Consider the following 318-residue polypeptide: NADH-ubiquinone oxidoreductase chain 1 (318 aa).

8 helical membrane passes run 2 to 22, 76 to 96, 98 to 118, 140 to 160, 171 to 191, 217 to 237, 253 to 273, and 294 to 314; these read FMVNLLLLIIPALIAMAFLTL, TLALSIALLMWSPLPMPHPLI, FNLGLLFMLATSSLAVYSILW, ISYEVTLAIILLSTLLMSGSF, HSWLLLPSWPMAMMWFTSTLA, AGSFALFFMAEYMNIIMMNAL, ELYTMNFMTKTLLLTTLFLWI, and LPLTLALCMWYISMPALTSGI.

This sequence belongs to the complex I subunit 1 family. In terms of assembly, core subunit of respiratory chain NADH dehydrogenase (Complex I) which is composed of 45 different subunits.

It is found in the mitochondrion inner membrane. It catalyses the reaction a ubiquinone + NADH + 5 H(+)(in) = a ubiquinol + NAD(+) + 4 H(+)(out). Its function is as follows. Core subunit of the mitochondrial membrane respiratory chain NADH dehydrogenase (Complex I) which catalyzes electron transfer from NADH through the respiratory chain, using ubiquinone as an electron acceptor. Essential for the catalytic activity and assembly of complex I. In Ateles paniscus (Black spider monkey), this protein is NADH-ubiquinone oxidoreductase chain 1 (MT-ND1).